Consider the following 316-residue polypeptide: E3 ubiquitin-protein ligase rnf146 (316 aa).

Residues 36–74 (CAICLQTCVHPVSLPCKHIFCYLCVKGASWLGRRCALCR) form an RING-type zinc finger. One can recognise a WWE domain in the interval 91–167 (EELKSASRGN…EHGRRRKIKR (77 aa)). Tyrosine 107, arginine 110, tryptophan 114, tyrosine 144, glutamine 153, arginine 163, and lysine 175 together coordinate a glycoprotein. The disordered stretch occupies residues 257-316 (GRNNIGEGEEGQPLINARMPAPSALLEESEPSDSNDHGSPTLQHNSLLVPQSNRLPFGNP). Over residues 293–310 (HGSPTLQHNSLLVPQSNR) the composition is skewed to polar residues.

The protein localises to the cytoplasm. It localises to the cytosol. The protein resides in the nucleus. It carries out the reaction S-ubiquitinyl-[E2 ubiquitin-conjugating enzyme]-L-cysteine + [acceptor protein]-L-lysine = [E2 ubiquitin-conjugating enzyme]-L-cysteine + N(6)-ubiquitinyl-[acceptor protein]-L-lysine.. The protein operates within protein modification; protein ubiquitination. In terms of biological role, E3 ubiquitin-protein ligase that specifically binds poly-ADP-ribosylated proteins and mediates their ubiquitination and subsequent degradation. May regulate many important biological processes, such as cell survival and DNA damage response. Acts as an activator of the Wnt signaling pathway by mediating the ubiquitination of poly-ADP-ribosylated proteins. Neuroprotective protein. Protects against cell death induced by DNA damaging agents and rescues cells from G1 arrest. Promotes cell survival after gamma-irradiation. Facilitates DNA repair. The chain is E3 ubiquitin-protein ligase rnf146 (rnf146) from Xenopus tropicalis (Western clawed frog).